A 107-amino-acid chain; its full sequence is Nucleoid-associated protein Daro_0807 (107 aa).

This sequence belongs to the YbaB/EbfC family. Homodimer.

The protein resides in the cytoplasm. Its subcellular location is the nucleoid. Functionally, binds to DNA and alters its conformation. May be involved in regulation of gene expression, nucleoid organization and DNA protection. This is Nucleoid-associated protein Daro_0807 from Dechloromonas aromatica (strain RCB).